The following is a 101-amino-acid chain: Small ribosomal subunit protein uS14 (101 aa).

The protein belongs to the universal ribosomal protein uS14 family. As to quaternary structure, part of the 30S ribosomal subunit. Contacts proteins S3 and S10.

Binds 16S rRNA, required for the assembly of 30S particles and may also be responsible for determining the conformation of the 16S rRNA at the A site. The protein is Small ribosomal subunit protein uS14 of Aliivibrio salmonicida (strain LFI1238) (Vibrio salmonicida (strain LFI1238)).